The primary structure comprises 131 residues: Fumarate reductase subunit C (131 aa).

The next 3 membrane-spanning stretches (helical) occupy residues 30-50 (EGTA…LFAL), 61-81 (IGFL…AAAL), and 110-130 (IKGL…VALF).

The protein belongs to the FrdC family. As to quaternary structure, part of an enzyme complex containing four subunits: a flavoprotein (FrdA), an iron-sulfur protein (FrdB), and two hydrophobic anchor proteins (FrdC and FrdD).

The protein localises to the cell inner membrane. Functionally, two distinct, membrane-bound, FAD-containing enzymes are responsible for the catalysis of fumarate and succinate interconversion; fumarate reductase is used in anaerobic growth, and succinate dehydrogenase is used in aerobic growth. Anchors the catalytic components of the fumarate reductase complex to the cell inner membrane, binds quinones. The polypeptide is Fumarate reductase subunit C (Klebsiella pneumoniae (strain 342)).